A 2200-amino-acid polypeptide reads, in one-letter code: Tyrosine-protein phosphatase Lar-like (2200 aa).

Positions 1–42 (MIQFRNKNNSMNRIARHLRNVARRKGSSLLLFLMLSTVLVAA) are cleaved as a signal peptide. Asn8 and Asn116 each carry an N-linked (GlcNAc...) asparagine glycan. Over 43–1497 (KEDDPARLVV…LRGASQKSSP (1455 aa)) the chain is Extracellular. Ig-like C2-type domains are found at residues 47-139 (PARL…ASLT), 151-240 (PQIE…KAAN), and 250-334 (PYFS…TTVI). 2 disulfide bridges follow: Cys69–Cys122 and Cys172–Cys225. N-linked (GlcNAc...) asparagine glycosylation is found at Asn269 and Asn315. A disulfide bond links Cys272 and Cys318. 9 Fibronectin type-III domains span residues 341-434 (PPVN…TKPS), 439-535 (APVS…TRQG), 539-628 (QPPM…TIAS), 633-748 (SPTI…TLED), 752-856 (APRN…IPPE), 857-956 (APEI…PVGS), 957-1053 (PDGE…PDPA), 1058-1158 (PPTN…NYMT), and 1181-1287 (MVQN…TGPP). N-linked (GlcNAc...) asparagine glycosylation is present at Asn574. Asn945, Asn988, Asn1069, Asn1141, Asn1212, and Asn1330 each carry an N-linked (GlcNAc...) asparagine glycan. Positions 1355–1392 (LARSLSVSPSKKLKRKASEVGDDSQSASYHPKEKRARR) are disordered. Residues 1498 to 1518 (WVGACIAFLVLFSIVGMLICW) traverse the membrane as a helical segment. Over 1519 to 2200 (WLRCNKKSAG…EYLAAYDNFS (682 aa)) the chain is Cytoplasmic. Tyrosine-protein phosphatase domains are found at residues 1647–1902 (FQSE…VLDA) and 1933–2192 (IDME…AYEY). Residues Asp1811, 1843-1849 (CSAGIGR), and Gln1887 each bind substrate. The active-site Phosphocysteine intermediate is Cys1843. Cys2133 acts as the Phosphocysteine intermediate in catalysis.

Belongs to the protein-tyrosine phosphatase family. Receptor class 2A subfamily. In terms of tissue distribution, both isoforms are ubiquitously expressed in early embryos. In later embryos, larvae and adults expression is highest in the nerve ring, dorsal cord, ventral cord and epithelial tissues.

The protein localises to the cell junction. The protein resides in the adherens junction. It localises to the cell membrane. It carries out the reaction O-phospho-L-tyrosyl-[protein] + H2O = L-tyrosyl-[protein] + phosphate. Functionally, has a role in early neural and epidermal development; neuroblast movements during closure of the gastrulation cleft and epidermal morphogenesis. Vab-1 and ptp-3 may function redundantly within the same sets of neuronal precursors. This chain is Tyrosine-protein phosphatase Lar-like (ptp-3), found in Caenorhabditis elegans.